Reading from the N-terminus, the 129-residue chain is Follitropin subunit beta (129 aa).

The N-terminal stretch at 1–20 (MKTAQFYIFFFCWKAIWCNG) is a signal peptide. 6 disulfide bridges follow: cysteine 21–cysteine 69, cysteine 35–cysteine 84, cysteine 38–cysteine 122, cysteine 46–cysteine 100, cysteine 50–cysteine 102, and cysteine 105–cysteine 112. N-linked (GlcNAc...) asparagine glycosylation is found at asparagine 25 and asparagine 42.

This sequence belongs to the glycoprotein hormones subunit beta family. As to quaternary structure, heterodimer. The active follitropin is a heterodimer composed of an alpha chain/CGA shared with other hormones and a unique beta chain/FSHB shown here.

Its subcellular location is the secreted. In terms of biological role, together with the alpha chain CGA constitutes follitropin, the follicle-stimulating hormone, and provides its biological specificity to the hormone heterodimer. Binds FSHR, a G protein-coupled receptor, on target cells to activate downstream signaling pathways. Follitropin is involved in follicle development and spermatogenesis in reproductive organs. This Monodelphis domestica (Gray short-tailed opossum) protein is Follitropin subunit beta (FSHB).